A 405-amino-acid chain; its full sequence is L-carnitine CoA-transferase (405 aa).

Positions 97 and 104 each coordinate CoA. D169 (nucleophile) is an active-site residue.

Belongs to the CoA-transferase III family. CaiB subfamily. As to quaternary structure, homodimer.

It is found in the cytoplasm. It catalyses the reaction crotonobetainyl-CoA + (R)-carnitine = crotonobetaine + (R)-carnitinyl-CoA. It carries out the reaction 4-(trimethylamino)butanoyl-CoA + (R)-carnitine = (R)-carnitinyl-CoA + 4-(trimethylamino)butanoate. The protein operates within amine and polyamine metabolism; carnitine metabolism. Its function is as follows. Catalyzes the reversible transfer of the CoA moiety from gamma-butyrobetainyl-CoA to L-carnitine to generate L-carnitinyl-CoA and gamma-butyrobetaine. Is also able to catalyze the reversible transfer of the CoA moiety from gamma-butyrobetainyl-CoA or L-carnitinyl-CoA to crotonobetaine to generate crotonobetainyl-CoA. The chain is L-carnitine CoA-transferase from Salmonella enteritidis PT4 (strain P125109).